The chain runs to 246 residues: O-antigen export system ATP-binding protein RfbB (246 aa).

One can recognise an ABC transporter domain in the interval 22–246; it reads SGIKDLVFHP…IIELYKQAMA (225 aa). 63–70 is a binding site for ATP; sequence GRNGAGKS.

The protein belongs to the ABC transporter superfamily.

The protein resides in the cell inner membrane. In terms of biological role, may form an ATP-driven O-antigen export apparatus, in association with RfbA. This Klebsiella pneumoniae protein is O-antigen export system ATP-binding protein RfbB (rfbB).